A 1412-amino-acid chain; its full sequence is DNA-directed RNA polymerase subunit beta' (1412 aa).

The Mg(2+) site is built by D543, D545, and D547. Zn(2+) is bound by residues C1017, C1092, C1099, and C1102.

Belongs to the RNA polymerase beta' chain family. The RNAP catalytic core consists of 2 alpha, 1 beta, 1 beta' and 1 omega subunit. When a sigma factor is associated with the core the holoenzyme is formed, which can initiate transcription. Mg(2+) is required as a cofactor. Requires Zn(2+) as cofactor.

The enzyme catalyses RNA(n) + a ribonucleoside 5'-triphosphate = RNA(n+1) + diphosphate. Functionally, DNA-dependent RNA polymerase catalyzes the transcription of DNA into RNA using the four ribonucleoside triphosphates as substrates. The sequence is that of DNA-directed RNA polymerase subunit beta' from Mesomycoplasma hyopneumoniae (strain J / ATCC 25934 / NCTC 10110) (Mycoplasma hyopneumoniae).